Here is a 237-residue protein sequence, read N- to C-terminus: LexA repressor (237 aa).

The segment covering 1–12 has biased composition (polar residues); that stretch reads MPVKDSSSNKKN. The segment at 1 to 20 is disordered; that stretch reads MPVKDSSSNKKNQIGKLSER. Positions 41-61 form a DNA-binding region, H-T-H motif; it reads IREIGDAAGLQSTSSVAYQLK. Positions 67–80 are enriched in basic and acidic residues; it reads GYLRRDPNKPRAVD. Residues 67–112 are disordered; that stretch reads GYLRRDPNKPRAVDVRALPDPIPSKPGRKPGPKKSSVAISPDPAET. Catalysis depends on for autocatalytic cleavage activity residues S161 and K198.

Belongs to the peptidase S24 family. In terms of assembly, homodimer.

The enzyme catalyses Hydrolysis of Ala-|-Gly bond in repressor LexA.. In terms of biological role, represses a number of genes involved in the response to DNA damage (SOS response), including recA and lexA. In the presence of single-stranded DNA, RecA interacts with LexA causing an autocatalytic cleavage which disrupts the DNA-binding part of LexA, leading to derepression of the SOS regulon and eventually DNA repair. In Corynebacterium diphtheriae (strain ATCC 700971 / NCTC 13129 / Biotype gravis), this protein is LexA repressor.